The sequence spans 408 residues: Bifunctional enzyme IspD/IspF (408 aa).

The tract at residues 1–247 (MNAPFEKDRR…GPAMTELPDI (247 aa)) is 2-C-methyl-D-erythritol 4-phosphate cytidylyltransferase. Residues 248–408 (RVGNGYDVHG…TVAYPGSLGN (161 aa)) are 2-C-methyl-D-erythritol 2,4-cyclodiphosphate synthase. Residues Asp-254 and His-256 each contribute to the a divalent metal cation site. 4-CDP-2-C-methyl-D-erythritol 2-phosphate contacts are provided by residues 254 to 256 (DVH) and 280 to 281 (HS). An a divalent metal cation-binding site is contributed by His-288. Residues 302 to 304 (DIG), 378 to 381 (TTNE), Phe-385, and Arg-388 contribute to the 4-CDP-2-C-methyl-D-erythritol 2-phosphate site.

This sequence in the N-terminal section; belongs to the IspD/TarI cytidylyltransferase family. IspD subfamily. The protein in the C-terminal section; belongs to the IspF family. A divalent metal cation serves as cofactor.

The enzyme catalyses 2-C-methyl-D-erythritol 4-phosphate + CTP + H(+) = 4-CDP-2-C-methyl-D-erythritol + diphosphate. It carries out the reaction 4-CDP-2-C-methyl-D-erythritol 2-phosphate = 2-C-methyl-D-erythritol 2,4-cyclic diphosphate + CMP. Its pathway is isoprenoid biosynthesis; isopentenyl diphosphate biosynthesis via DXP pathway; isopentenyl diphosphate from 1-deoxy-D-xylulose 5-phosphate: step 2/6. It participates in isoprenoid biosynthesis; isopentenyl diphosphate biosynthesis via DXP pathway; isopentenyl diphosphate from 1-deoxy-D-xylulose 5-phosphate: step 4/6. Functionally, bifunctional enzyme that catalyzes the formation of 4-diphosphocytidyl-2-C-methyl-D-erythritol from CTP and 2-C-methyl-D-erythritol 4-phosphate (MEP) (IspD), and catalyzes the conversion of 4-diphosphocytidyl-2-C-methyl-D-erythritol 2-phosphate (CDP-ME2P) to 2-C-methyl-D-erythritol 2,4-cyclodiphosphate (ME-CPP) with a corresponding release of cytidine 5-monophosphate (CMP) (IspF). The protein is Bifunctional enzyme IspD/IspF of Chelativorans sp. (strain BNC1).